We begin with the raw amino-acid sequence, 309 residues long: Cyclin-dependent kinase B1-1 (309 aa).

Residues 4 to 301 (YEKLEKVGEG…AKTALDHPYF (298 aa)) form the Protein kinase domain. Residues 10-18 (VGEGTYGKV) and lysine 33 each bind ATP. Tyrosine 15 carries the phosphotyrosine modification. Aspartate 142 acts as the Proton acceptor in catalysis. Position 176 is a phosphothreonine; by CAK (threonine 176).

The protein belongs to the protein kinase superfamily. CMGC Ser/Thr protein kinase family. CDC2/CDKX subfamily. In terms of assembly, interacts with CKS1. Interacts with CYCU3-1. Interacts with SIM, SMR1 and SMR2. As to expression, highly expressed in guard cells and stomatal precursor cells of cotyledons. Expressed in roots, stems, flowers and siliques.

It localises to the nucleus. The catalysed reaction is L-seryl-[protein] + ATP = O-phospho-L-seryl-[protein] + ADP + H(+). It catalyses the reaction L-threonyl-[protein] + ATP = O-phospho-L-threonyl-[protein] + ADP + H(+). The enzyme catalyses [DNA-directed RNA polymerase] + ATP = phospho-[DNA-directed RNA polymerase] + ADP + H(+). Phosphorylation at Thr-14 or Tyr-15 inactivates the enzyme, while phosphorylation at Thr-176 activates it. Its function is as follows. May control G2/M (mitosis) phase progression. Plays a role in regulating seedling growth in darkness via regulation of hypocotyl cell elongation and cotyledon cell development. Plays a role in stomatal development. Required to suppress endoreduplication. Together with CDKB1-2, promotes both the last division in the stomatal cell lineage as well as the number of stomata. In collaboration with MYB124 and MYB88, restrict the G1/S transition and chloroplast and nuclear number during stomatal formation, and normally maintain fate and developmental progression throughout the stomatal cell lineage. The chain is Cyclin-dependent kinase B1-1 (CDKB1-1) from Arabidopsis thaliana (Mouse-ear cress).